Reading from the N-terminus, the 72-residue chain is Translation initiation factor IF-1 2 (72 aa).

The 72-residue stretch at methionine 1–lysine 72 folds into the S1-like domain.

It belongs to the IF-1 family. As to quaternary structure, component of the 30S ribosomal translation pre-initiation complex which assembles on the 30S ribosome in the order IF-2 and IF-3, IF-1 and N-formylmethionyl-tRNA(fMet); mRNA recruitment can occur at any time during PIC assembly.

The protein resides in the cytoplasm. Functionally, one of the essential components for the initiation of protein synthesis. Stabilizes the binding of IF-2 and IF-3 on the 30S subunit to which N-formylmethionyl-tRNA(fMet) subsequently binds. Helps modulate mRNA selection, yielding the 30S pre-initiation complex (PIC). Upon addition of the 50S ribosomal subunit IF-1, IF-2 and IF-3 are released leaving the mature 70S translation initiation complex. This chain is Translation initiation factor IF-1 2, found in Ralstonia nicotianae (strain ATCC BAA-1114 / GMI1000) (Ralstonia solanacearum).